A 93-amino-acid chain; its full sequence is UPF0223 protein str0998 (93 aa).

Belongs to the UPF0223 family.

This is UPF0223 protein str0998 from Streptococcus thermophilus (strain CNRZ 1066).